Reading from the N-terminus, the 233-residue chain is Adenosylcobinamide-GDP ribazoletransferase (233 aa).

7 consecutive transmembrane segments (helical) span residues 24–44 (LWAL…VLYL), 46–66 (LPLS…LLHL), 96–116 (IAGV…LPLL), 117–137 (PFYA…LALA), 158–178 (QLTL…YIEP), 181–198 (ISSL…RLSL), and 209–229 (IGAV…VVWV).

Belongs to the CobS family. The cofactor is Mg(2+).

Its subcellular location is the cell membrane. It catalyses the reaction alpha-ribazole + adenosylcob(III)inamide-GDP = adenosylcob(III)alamin + GMP + H(+). The catalysed reaction is alpha-ribazole 5'-phosphate + adenosylcob(III)inamide-GDP = adenosylcob(III)alamin 5'-phosphate + GMP + H(+). It participates in cofactor biosynthesis; adenosylcobalamin biosynthesis; adenosylcobalamin from cob(II)yrinate a,c-diamide: step 7/7. In terms of biological role, joins adenosylcobinamide-GDP and alpha-ribazole to generate adenosylcobalamin (Ado-cobalamin). Also synthesizes adenosylcobalamin 5'-phosphate from adenosylcobinamide-GDP and alpha-ribazole 5'-phosphate. This chain is Adenosylcobinamide-GDP ribazoletransferase, found in Thermococcus gammatolerans (strain DSM 15229 / JCM 11827 / EJ3).